Consider the following 412-residue polypeptide: Glutamyl-tRNA reductase (412 aa).

Substrate contacts are provided by residues Thr-52–Arg-55, Ser-108, Glu-113–Glu-115, and Gln-119. Cys-53 functions as the Nucleophile in the catalytic mechanism. Residue Gly-189–Gly-194 participates in NADP(+) binding.

Belongs to the glutamyl-tRNA reductase family. In terms of assembly, homodimer.

The catalysed reaction is (S)-4-amino-5-oxopentanoate + tRNA(Glu) + NADP(+) = L-glutamyl-tRNA(Glu) + NADPH + H(+). The protein operates within porphyrin-containing compound metabolism; protoporphyrin-IX biosynthesis; 5-aminolevulinate from L-glutamyl-tRNA(Glu): step 1/2. Its function is as follows. Catalyzes the NADPH-dependent reduction of glutamyl-tRNA(Glu) to glutamate 1-semialdehyde (GSA). The polypeptide is Glutamyl-tRNA reductase (Sulfurisphaera tokodaii (strain DSM 16993 / JCM 10545 / NBRC 100140 / 7) (Sulfolobus tokodaii)).